We begin with the raw amino-acid sequence, 122 residues long: Large ribosomal subunit protein uL14 (122 aa).

The protein belongs to the universal ribosomal protein uL14 family. As to quaternary structure, part of the 50S ribosomal subunit. Forms a cluster with proteins L3 and L19. In the 70S ribosome, L14 and L19 interact and together make contacts with the 16S rRNA in bridges B5 and B8.

Its function is as follows. Binds to 23S rRNA. Forms part of two intersubunit bridges in the 70S ribosome. The polypeptide is Large ribosomal subunit protein uL14 (Bradyrhizobium diazoefficiens (strain JCM 10833 / BCRC 13528 / IAM 13628 / NBRC 14792 / USDA 110)).